We begin with the raw amino-acid sequence, 407 residues long: Lymphocyte transmembrane adapter 1 (407 aa).

The tract at residues 1–25 (MYSTPAPPEVTRRNSEPSTRQGTLG) is disordered. Topologically, residues 1-33 (MYSTPAPPEVTRRNSEPSTRQGTLGSLQGEKGQ) are extracellular. The segment covering 16 to 25 (EPSTRQGTLG) has biased composition (polar residues). Residues 34–54 (IIFPGFVVLLTIILVIIAACI) traverse the membrane as a helical; Signal-anchor for type III membrane protein segment. Residues 55–407 (LWSWKKQKKR…LATETSDEDA (353 aa)) are Cytoplasmic-facing. The segment at 109–131 (ESLLSRASDSPEPEAPQANGSLQ) is disordered. Tyr185, Tyr260, Tyr286, and Tyr353 each carry phosphotyrosine. The segment at 331 to 388 (SAQSEDSAMVHREEQSSEDSSDYETVLVAELEGRDWKQGPGTQHPSDEGTPGDLAGKL) is disordered.

When phosphorylated, interacts with GRB2, PIK3R1 and GRAP2. In terms of processing, phosphorylated on tyrosines upon TCR or BCR activation; which leads to the recruitment of GRB2, PIK3R1 and GRAP2. Expressed in T-cells and B-cells.

The protein localises to the cell membrane. Functionally, negatively regulates TCR (T-cell antigen receptor)-mediated signaling in T-cells and BCR (B-cell antigen receptor)-mediated signaling in B-cells. This is Lymphocyte transmembrane adapter 1 (Lax1) from Mus musculus (Mouse).